The sequence spans 274 residues: MSYSALEAAIEAAWEARETITPATKGETREAIEATLEALDKGSLRVAEKRGADWHVNQWAKKAVLLGFRLKDMEVQTGGPQAGTWWDKVDSKFAQWGEAQWKAAGFRAVPNCIVRRSAYIARGVVLMPSFVNLGAYVDESTMVDTWATVGSCAQIGKNVHLSGGVGIGGVLEPMQAGPTIIEDNCFIGARSEVVEGCIVREGSVLGMGVFIGKSTKIVDRETGEVMYGEVPAGSVVVAGSMPSKGGVNLYCAVIVKRVDAQTRSKTSINELLRD.

2 residues coordinate substrate: Arg-107 and Asp-144.

Belongs to the transferase hexapeptide repeat family. In terms of assembly, homotrimer.

The protein resides in the cytoplasm. It carries out the reaction (S)-2,3,4,5-tetrahydrodipicolinate + succinyl-CoA + H2O = (S)-2-succinylamino-6-oxoheptanedioate + CoA. Its pathway is amino-acid biosynthesis; L-lysine biosynthesis via DAP pathway; LL-2,6-diaminopimelate from (S)-tetrahydrodipicolinate (succinylase route): step 1/3. The protein is 2,3,4,5-tetrahydropyridine-2,6-dicarboxylate N-succinyltransferase of Cereibacter sphaeroides (strain ATCC 17029 / ATH 2.4.9) (Rhodobacter sphaeroides).